Reading from the N-terminus, the 22-residue chain is Superoxide dismutase [Cu-Zn] (22 aa).

This sequence belongs to the Cu-Zn superoxide dismutase family. As to quaternary structure, homodimer. Cu cation serves as cofactor. The cofactor is Zn(2+).

The protein resides in the cytoplasm. The catalysed reaction is 2 superoxide + 2 H(+) = H2O2 + O2. Destroys radicals which are normally produced within the cells and which are toxic to biological systems. The protein is Superoxide dismutase [Cu-Zn] of Hordeum vulgare (Barley).